A 452-amino-acid polypeptide reads, in one-letter code: 23S rRNA (uracil(1939)-C(5))-methyltransferase RlmD (452 aa).

The disordered stretch occupies residues Met-1–Ile-23. The TRAM domain maps to Gln-22 to Arg-80. Cys-93, Cys-99, Cys-102, and Cys-181 together coordinate [4Fe-4S] cluster. S-adenosyl-L-methionine contacts are provided by Gln-285, Phe-314, Asn-319, Glu-335, Asp-362, and Asp-383. Cys-409 (nucleophile) is an active-site residue.

Belongs to the class I-like SAM-binding methyltransferase superfamily. RNA M5U methyltransferase family. RlmD subfamily.

It carries out the reaction uridine(1939) in 23S rRNA + S-adenosyl-L-methionine = 5-methyluridine(1939) in 23S rRNA + S-adenosyl-L-homocysteine + H(+). Functionally, catalyzes the formation of 5-methyl-uridine at position 1939 (m5U1939) in 23S rRNA. This chain is 23S rRNA (uracil(1939)-C(5))-methyltransferase RlmD, found in Pseudomonas entomophila (strain L48).